A 486-amino-acid polypeptide reads, in one-letter code: Glutamyl-tRNA(Gln) amidotransferase subunit A (486 aa).

Catalysis depends on charge relay system residues Lys74 and Ser149. Ser173 (acyl-ester intermediate) is an active-site residue.

It belongs to the amidase family. GatA subfamily. In terms of assembly, heterotrimer of A, B and C subunits.

It carries out the reaction L-glutamyl-tRNA(Gln) + L-glutamine + ATP + H2O = L-glutaminyl-tRNA(Gln) + L-glutamate + ADP + phosphate + H(+). In terms of biological role, allows the formation of correctly charged Gln-tRNA(Gln) through the transamidation of misacylated Glu-tRNA(Gln) in organisms which lack glutaminyl-tRNA synthetase. The reaction takes place in the presence of glutamine and ATP through an activated gamma-phospho-Glu-tRNA(Gln). The polypeptide is Glutamyl-tRNA(Gln) amidotransferase subunit A (Prochlorococcus marinus (strain NATL2A)).